The following is a 732-amino-acid chain: Catalase-peroxidase (732 aa).

Residues 1-15 (MSTESKCPFAGGAYA) form the signal peptide. Positions 96–219 (WHSAGTYRIY…LGAVQMGLIY (124 aa)) form a cross-link, tryptophyl-tyrosyl-methioninium (Trp-Tyr) (with M-245). His-97 functions as the Proton acceptor in the catalytic mechanism. The tryptophyl-tyrosyl-methioninium (Tyr-Met) (with W-96) cross-link spans 219–245 (YVNPEGPNGNPDPLASARDIRETFARM). His-260 lines the heme b pocket.

Belongs to the peroxidase family. Peroxidase/catalase subfamily. Homodimer or homotetramer. Heme b serves as cofactor. Post-translationally, formation of the three residue Trp-Tyr-Met cross-link is important for the catalase, but not the peroxidase activity of the enzyme.

The enzyme catalyses H2O2 + AH2 = A + 2 H2O. It carries out the reaction 2 H2O2 = O2 + 2 H2O. Functionally, bifunctional enzyme with both catalase and broad-spectrum peroxidase activity. This Acidobacterium capsulatum (strain ATCC 51196 / DSM 11244 / BCRC 80197 / JCM 7670 / NBRC 15755 / NCIMB 13165 / 161) protein is Catalase-peroxidase.